Consider the following 248-residue polypeptide: Mannose-binding protein C (248 aa).

A signal peptide spans 1 to 20 (MSLFPSLTLLLLSVVATSYS). One can recognise a Collagen-like domain in the interval 42 to 99 (GINGFPGKDGRDGTKGEKGEPGQGLRGLQGPPGKLGPPGNPGSSGSPGPKGQKGDPGE). A disordered region spans residues 43 to 113 (INGFPGKDGR…DSSLAASERK (71 aa)). P47 is modified (4-hydroxyproline). Residues 49-61 (KDGRDGTKGEKGE) are compositionally biased toward basic and acidic residues. 4-hydroxyproline occurs at positions 73, 79, 82, and 88. Low complexity predominate over residues 82–91 (PGSSGSPGPK). Residues 112–130 (RKALQTEMARIKKWLTFSL) are a coiled coil. One can recognise a C-type lectin domain in the interval 134–245 (VGNKFFLTNG…CSSSHLALCE (112 aa)). Cystine bridges form between C155/C244 and C222/C236.

In terms of assembly, oligomeric complex of 3 or more homotrimers. Interacts with MASP1 and MASP2. Interacts with MEP1A and MEP1B and may inhibit their catalytic activity. In terms of processing, hydroxylation on proline residues within the sequence motif, GXPG, is most likely to be 4-hydroxy as this fits the requirement for 4-hydroxylation in vertebrates.

The protein resides in the secreted. In terms of biological role, calcium-dependent lectin involved in innate immune defense. Binds mannose, fucose and N-acetylglucosamine on different microorganisms and activates the lectin complement pathway. Binds to late apoptotic cells, as well as to apoptotic blebs and to necrotic cells, but not to early apoptotic cells, facilitating their uptake by macrophages. The sequence is that of Mannose-binding protein C (MBL2) from Chlorocebus aethiops (Green monkey).